A 291-amino-acid polypeptide reads, in one-letter code: MAVGKEILTKIRSVQNTQKITKAMQMVSTSKMRKTQERMRLARPYAEKVRMVMSHLAQTNTDHGIPLLESHREIRRVGFILITSDKGLCGGLNANVLKKFLAQVQEYQNQGIEEEIVCLGSKGLMACQSIGLNVVASAVNLGDTPKMEMLLGPLTELFQRYEKHEIDRIHLVYSGFVNTMRQEPRMEVLLPIGENVIGDSAPKSPFSWEYRYEPTALAVLEYLVRRYLESVVYQALSDNMASEQAARMVAMKAATDNAGNAIKELRLVYNKSRQAAITTELSEIVAGAAAV.

It belongs to the ATPase gamma chain family. F-type ATPases have 2 components, CF(1) - the catalytic core - and CF(0) - the membrane proton channel. CF(1) has five subunits: alpha(3), beta(3), gamma(1), delta(1), epsilon(1). CF(0) has three main subunits: a, b and c.

The protein resides in the cell inner membrane. Its function is as follows. Produces ATP from ADP in the presence of a proton gradient across the membrane. The gamma chain is believed to be important in regulating ATPase activity and the flow of protons through the CF(0) complex. The polypeptide is ATP synthase gamma chain (Neisseria meningitidis serogroup A / serotype 4A (strain DSM 15465 / Z2491)).